We begin with the raw amino-acid sequence, 497 residues long: Probable pectinesterase 30 (497 aa).

Positions 1–21 (MLVKVFSFFILMIIMVIGVSK) are cleaved as a signal peptide. 2 N-linked (GlcNAc...) asparagine glycosylation sites follow: Asn-238 and Asn-254. Thr-263 is a substrate binding site. Asp-316 acts as the Proton donor in catalysis. Cysteines 330 and 350 form a disulfide. The active-site Nucleophile is Asp-337. An N-linked (GlcNAc...) asparagine glycan is attached at Asn-385. Residues Arg-403 and Trp-405 each coordinate substrate.

This sequence belongs to the pectinesterase family. As to expression, expressed in siliques.

It is found in the secreted. Its subcellular location is the cell wall. The enzyme catalyses [(1-&gt;4)-alpha-D-galacturonosyl methyl ester](n) + n H2O = [(1-&gt;4)-alpha-D-galacturonosyl](n) + n methanol + n H(+). It participates in glycan metabolism; pectin degradation; 2-dehydro-3-deoxy-D-gluconate from pectin: step 1/5. Acts in the modification of cell walls via demethylesterification of cell wall pectin. This is Probable pectinesterase 30 (PME30) from Arabidopsis thaliana (Mouse-ear cress).